The following is a 287-amino-acid chain: Inorganic pyrophosphatase (287 aa).

Arg79 contributes to the diphosphate binding site. Mg(2+) is bound by residues Asp116, Asp121, and Asp153.

The protein belongs to the PPase family. It depends on Mg(2+) as a cofactor.

The protein localises to the cytoplasm. The enzyme catalyses diphosphate + H2O = 2 phosphate + H(+). This Candida glabrata (strain ATCC 2001 / BCRC 20586 / JCM 3761 / NBRC 0622 / NRRL Y-65 / CBS 138) (Yeast) protein is Inorganic pyrophosphatase (IPP1).